The chain runs to 308 residues: Acetaldehyde dehydrogenase (308 aa).

NAD(+) is bound at residue Ser10–Ile13. The Acyl-thioester intermediate role is filled by Cys128. NAD(+) is bound by residues Ser159–Asn167 and Asn285.

Belongs to the acetaldehyde dehydrogenase family.

It catalyses the reaction acetaldehyde + NAD(+) + CoA = acetyl-CoA + NADH + H(+). This is Acetaldehyde dehydrogenase from Salinispora tropica (strain ATCC BAA-916 / DSM 44818 / JCM 13857 / NBRC 105044 / CNB-440).